The sequence spans 513 residues: Ferulic acid decarboxylase 1 (513 aa).

Mn(2+) is bound by residues Asn174, His197, and Glu240. Prenylated FMN is bound by residues 174–179 (NWSIAR), 196–197 (QH), and Glu240. Glu289 serves as the catalytic Proton donor. A prenylated FMN-binding site is contributed by Lys405.

Belongs to the UbiD family. UbiD-like/FDC subfamily. As to quaternary structure, homodimer. May form higher order oligomers. Mn(2+) is required as a cofactor. It depends on prenylated FMN as a cofactor.

Its subcellular location is the cytoplasm. It catalyses the reaction (E)-4-coumarate + H(+) = 4-vinylphenol + CO2. It carries out the reaction (E)-cinnamate + H(+) = styrene + CO2. The catalysed reaction is (E)-ferulate + H(+) = 2-methoxy-4-vinylphenol + CO2. Functionally, catalyzes the reversible decarboxylation of aromatic carboxylic acids like ferulic acid, p-coumaric acid or cinnamic acid, producing the corresponding vinyl derivatives 4-vinylphenol, 4-vinylguaiacol, and styrene, respectively, which play the role of aroma metabolites. The polypeptide is Ferulic acid decarboxylase 1 (Candida dubliniensis (strain CD36 / ATCC MYA-646 / CBS 7987 / NCPF 3949 / NRRL Y-17841) (Yeast)).